Here is a 479-residue protein sequence, read N- to C-terminus: Poly(A) polymerase catalytic subunit (479 aa).

Catalysis depends on residues D202 and D204. The Ca(2+) site is built by D202, D204, and D253.

Belongs to the poxviridae poly(A) polymerase catalytic subunit family. As to quaternary structure, heterodimer of a large (catalytic) subunit and a small (regulatory) subunit.

It carries out the reaction RNA(n) + ATP = RNA(n)-3'-adenine ribonucleotide + diphosphate. Polymerase that creates the 3'-poly(A) tail of mRNA's. This is Poly(A) polymerase catalytic subunit (OPG063) from Homo sapiens (Human).